A 272-amino-acid polypeptide reads, in one-letter code: Alkaline ceramidase (272 aa).

2 helical membrane-spanning segments follow: residues Phe-34–Leu-54 and Val-61–Tyr-81. His-83 lines the Zn(2+) pocket. The next 4 helical transmembrane spans lie at Leu-96 to Phe-116, Leu-124 to Leu-144, Leu-148 to Gly-168, and Ile-183 to Phe-203. Residues His-213 and His-217 each contribute to the Zn(2+) site. Residues Ala-214–Ile-234 form a helical membrane-spanning segment. A glycan (N-linked (GlcNAc...) asparagine) is linked at Asn-256.

Belongs to the alkaline ceramidase family. The cofactor is Zn(2+).

It is found in the membrane. The catalysed reaction is an N-acylsphing-4-enine + H2O = sphing-4-enine + a fatty acid. Hydrolyzes the sphingolipid ceramide into sphingosine and free fatty acid. The sequence is that of Alkaline ceramidase from Caenorhabditis briggsae.